We begin with the raw amino-acid sequence, 155 residues long: MPKGEGKVIAQNKKAHHDYFIEETYEAGLVLQGTEIKSIRNGRVNLKDSFAKVEKGEVFLHNMHISPYEQGNRYNHDPLRTRKLLLHRREINKLIGYTKEQGYTLVPLKLYIKNGFAKVELGVAKGKKKYDKREDMKRREAQREIERAFRERQKL.

The protein belongs to the SmpB family.

It localises to the cytoplasm. Functionally, required for rescue of stalled ribosomes mediated by trans-translation. Binds to transfer-messenger RNA (tmRNA), required for stable association of tmRNA with ribosomes. tmRNA and SmpB together mimic tRNA shape, replacing the anticodon stem-loop with SmpB. tmRNA is encoded by the ssrA gene; the 2 termini fold to resemble tRNA(Ala) and it encodes a 'tag peptide', a short internal open reading frame. During trans-translation Ala-aminoacylated tmRNA acts like a tRNA, entering the A-site of stalled ribosomes, displacing the stalled mRNA. The ribosome then switches to translate the ORF on the tmRNA; the nascent peptide is terminated with the 'tag peptide' encoded by the tmRNA and targeted for degradation. The ribosome is freed to recommence translation, which seems to be the essential function of trans-translation. The polypeptide is SsrA-binding protein (Geobacillus kaustophilus (strain HTA426)).